A 223-amino-acid polypeptide reads, in one-letter code: Neurotrophic factor BDNF precursor form (223 aa).

Positions 1–5 (SCMKA) are cleaved as a signal peptide. The propeptide occupies 6 to 114 (APMKEVSIRG…AANMSMRVRR (109 aa)). An N-linked (GlcNAc...) asparagine glycan is attached at Asn-107. Intrachain disulfides connect Cys-127/Cys-194 and Cys-172/Cys-223.

It belongs to the NGF-beta family.

It localises to the secreted. In terms of biological role, promotes the survival of neuronal populations that are all located either in the central nervous system or directly connected to it. The protein is Neurotrophic factor BDNF precursor form (BDNF) of Aspidites melanocephalus (Black-headed python).